A 324-amino-acid polypeptide reads, in one-letter code: uncharacterized protein (324 aa).

To the C-terminal of para-aminobenzoate synthase component I.

This is an uncharacterized protein from Pasteurella multocida (strain Pm70).